A 245-amino-acid chain; its full sequence is 5'-nucleotidase SurE (245 aa).

D8, D9, S39, and N91 together coordinate a divalent metal cation.

The protein belongs to the SurE nucleotidase family. Requires a divalent metal cation as cofactor.

Its subcellular location is the cytoplasm. It carries out the reaction a ribonucleoside 5'-phosphate + H2O = a ribonucleoside + phosphate. In terms of biological role, nucleotidase that shows phosphatase activity on nucleoside 5'-monophosphates. The protein is 5'-nucleotidase SurE of Psychromonas ingrahamii (strain DSM 17664 / CCUG 51855 / 37).